The following is a 1220-amino-acid chain: Polycomb protein Sfmbt (1220 aa).

Residues 322 to 357 form an FCS-type zinc finger; sequence PIQKDGMAVCKRCGAIGVKHTFYTKSRRFCSMACAR. The Zn(2+) site is built by C331, C334, C351, and C355. Disordered regions lie at residues 371–399 and 464–483; these read GDQATTSSPDPGAGSESADLPGDQQQSQS and DATAPGSTEEGASTPNSYLS. Over residues 473–482 the composition is skewed to polar residues; sequence EGASTPNSYL. MBT repeat units lie at residues 536-647, 655-753, 761-871, and 879-975; these read YDWL…LIPP, KDWK…LAAP, LAGR…VTPP, and FTWE…LEGP. Disordered regions lie at residues 976 to 1024 and 1050 to 1092; these read PRVA…IALK and NNQP…AGSG. A compositionally biased stretch (basic residues) spans 991–1000; that stretch reads KIQRKRKPKK. Residues 1052–1068 are compositionally biased toward acidic residues; that stretch reads QPEEEGDEEDPDADGDG. Residues 1071–1082 are compositionally biased toward polar residues; the sequence is STSHISEQSTTQ. A compositionally biased stretch (low complexity) spans 1083–1092; it reads SSSDLIAGSG. The SAM domain maps to 1140-1203; sequence WNVYDVSQFL…SDLIAQLKCK (64 aa).

Interacts with pho as a component of the pho-repressive complex (PhoRC).

Its subcellular location is the nucleus. Functionally, polycomb group (PcG) protein that binds to the Polycomb response elements (PREs) found in the regulatory regions of many genes. PcG proteins act by forming multiprotein complexes, which are required to maintain the transcriptionally repressive state of homeotic genes throughout development. PcG proteins are not required to initiate repression, but to maintain it during later stages of development. They probably act via the methylation of histones, rendering chromatin heritably changed in its expressibility. Necessary but not sufficient to recruit a functional PcG repressive complex that represses target genes, suggesting that the recruitment of the distinct PRC1 complex is also required to allow a subsequent repression. In Drosophila melanogaster (Fruit fly), this protein is Polycomb protein Sfmbt.